The chain runs to 321 residues: Aspartate carbamoyltransferase catalytic subunit (321 aa).

R65 and T66 together coordinate carbamoyl phosphate. L-aspartate is bound at residue K93. Positions 115, 143, and 146 each coordinate carbamoyl phosphate. L-aspartate is bound by residues R176 and R230. Carbamoyl phosphate is bound by residues G271 and P272.

It belongs to the aspartate/ornithine carbamoyltransferase superfamily. ATCase family. Heterododecamer (2C3:3R2) of six catalytic PyrB chains organized as two trimers (C3), and six regulatory PyrI chains organized as three dimers (R2).

The enzyme catalyses carbamoyl phosphate + L-aspartate = N-carbamoyl-L-aspartate + phosphate + H(+). Its pathway is pyrimidine metabolism; UMP biosynthesis via de novo pathway; (S)-dihydroorotate from bicarbonate: step 2/3. Catalyzes the condensation of carbamoyl phosphate and aspartate to form carbamoyl aspartate and inorganic phosphate, the committed step in the de novo pyrimidine nucleotide biosynthesis pathway. This is Aspartate carbamoyltransferase catalytic subunit from Bartonella henselae (strain ATCC 49882 / DSM 28221 / CCUG 30454 / Houston 1) (Rochalimaea henselae).